A 324-amino-acid chain; its full sequence is Beta-ketoacyl-[acyl-carrier-protein] synthase III (324 aa).

Residues Cys116 and His251 contribute to the active site. The segment at 252–256 (QANLR) is ACP-binding. Residue Asn281 is part of the active site.

Belongs to the thiolase-like superfamily. FabH family. As to quaternary structure, homodimer.

The protein localises to the cytoplasm. The catalysed reaction is malonyl-[ACP] + acetyl-CoA + H(+) = 3-oxobutanoyl-[ACP] + CO2 + CoA. It participates in lipid metabolism; fatty acid biosynthesis. Its function is as follows. Catalyzes the condensation reaction of fatty acid synthesis by the addition to an acyl acceptor of two carbons from malonyl-ACP. Catalyzes the first condensation reaction which initiates fatty acid synthesis and may therefore play a role in governing the total rate of fatty acid production. Possesses both acetoacetyl-ACP synthase and acetyl transacylase activities. Its substrate specificity determines the biosynthesis of branched-chain and/or straight-chain of fatty acids. The protein is Beta-ketoacyl-[acyl-carrier-protein] synthase III of Xylella fastidiosa (strain 9a5c).